We begin with the raw amino-acid sequence, 103 residues long: uncharacterized protein (103 aa).

This is an uncharacterized protein from Sulfolobus islandicus filamentous virus (isolate Iceland/Hveragerdi) (SIFV).